The primary structure comprises 370 residues: Protein FAM110B (370 aa).

Disordered stretches follow at residues 127–151 (SSEG…RSEA) and 237–256 (KSPE…RPSL). 2 positions are modified to phosphoserine: Ser-238 and Ser-301. A disordered region spans residues 317-337 (DCEQSQDSNSDLRNDDSANDR). Basic and acidic residues predominate over residues 326–335 (SDLRNDDSAN).

It belongs to the FAM110 family.

It is found in the cytoplasm. Its subcellular location is the cytoskeleton. It localises to the microtubule organizing center. The protein resides in the centrosome. The chain is Protein FAM110B (FAM110B) from Pongo abelii (Sumatran orangutan).